We begin with the raw amino-acid sequence, 458 residues long: Argininosuccinate lyase (458 aa).

Belongs to the lyase 1 family. Argininosuccinate lyase subfamily.

The protein resides in the cytoplasm. The catalysed reaction is 2-(N(omega)-L-arginino)succinate = fumarate + L-arginine. It participates in amino-acid biosynthesis; L-arginine biosynthesis; L-arginine from L-ornithine and carbamoyl phosphate: step 3/3. This chain is Argininosuccinate lyase, found in Glaesserella parasuis serovar 5 (strain SH0165) (Haemophilus parasuis).